Reading from the N-terminus, the 68-residue chain is MNLEERVMELESRMAFQDDTIQALNDVLVKQRREFDHLQQQMAAMIKRQEEMGSQFDTFEEDAPPPHY.

The protein belongs to the SlyX family.

The chain is Protein SlyX homolog from Pseudomonas syringae pv. tomato (strain ATCC BAA-871 / DC3000).